A 362-amino-acid polypeptide reads, in one-letter code: 3-dehydroquinate synthase (362 aa).

NAD(+) contacts are provided by residues 71–76 (DGEQYK), 105–109 (GVVGD), 129–130 (TT), Lys142, Lys151, and 169–172 (CLKT). 3 residues coordinate Zn(2+): Glu184, His247, and His264.

It belongs to the sugar phosphate cyclases superfamily. Dehydroquinate synthase family. Co(2+) is required as a cofactor. Zn(2+) serves as cofactor. It depends on NAD(+) as a cofactor.

It localises to the cytoplasm. It carries out the reaction 7-phospho-2-dehydro-3-deoxy-D-arabino-heptonate = 3-dehydroquinate + phosphate. It functions in the pathway metabolic intermediate biosynthesis; chorismate biosynthesis; chorismate from D-erythrose 4-phosphate and phosphoenolpyruvate: step 2/7. Functionally, catalyzes the conversion of 3-deoxy-D-arabino-heptulosonate 7-phosphate (DAHP) to dehydroquinate (DHQ). The protein is 3-dehydroquinate synthase of Escherichia coli O127:H6 (strain E2348/69 / EPEC).